The primary structure comprises 530 residues: Putative ABC transporter ATP-binding protein SSO2030 (530 aa).

2 ABC transporter domains span residues 6–243 (IRDL…LGLE) and 282–516 (ALYA…EPPL). ATP is bound by residues 38 to 45 (GRSGSGKS) and 314 to 321 (GKNGSGKT).

Belongs to the ABC transporter superfamily.

It is found in the cell membrane. Its function is as follows. Probably part of an ABC transporter complex. Responsible for energy coupling to the transport system. This chain is Putative ABC transporter ATP-binding protein SSO2030, found in Saccharolobus solfataricus (strain ATCC 35092 / DSM 1617 / JCM 11322 / P2) (Sulfolobus solfataricus).